The sequence spans 1216 residues: Phospholipase D B (1216 aa).

Polar residues predominate over residues methionine 1–histidine 14. The tract at residues methionine 1–serine 48 is disordered. Residues glutamine 17–arginine 33 are compositionally biased toward basic and acidic residues. EF-hand domains are found at residues arginine 196 to glycine 231 and threonine 232 to isoleucine 267. Ca(2+) contacts are provided by aspartate 209, asparagine 211, aspartate 213, lysine 215, and glutamate 220. Residues glutamate 347 to arginine 462 form the PH domain. A PLD phosphodiesterase 1 domain is found at leucine 585–arginine 612. Residues histidine 590, lysine 592, and aspartate 597 contribute to the active site. The segment at valine 732 to asparagine 844 is disordered. Residues asparagine 776 to serine 789 are compositionally biased toward low complexity. Acidic residues predominate over residues glutamate 790–lysine 813. The region spanning glutamate 1036 to serine 1063 is the PLD phosphodiesterase 2 domain. Residues histidine 1041, lysine 1043, and aspartate 1048 contribute to the active site.

The protein belongs to the phospholipase D family.

The protein localises to the cytoplasmic vesicle. The protein resides in the cytoplasm. It localises to the cell cortex. It catalyses the reaction a 1,2-diacyl-sn-glycero-3-phosphocholine + H2O = a 1,2-diacyl-sn-glycero-3-phosphate + choline + H(+). Inhibited by butan-1-ol. Functionally, plays a role in cell growth. Hydrolyzes membrane phospholipids, such as PtdCho (phosphatidylcholine), producing the free headgroup and PtdOH (phosphatidic acid; signaling molecule on its own). Involved in the inhibition of actin-based motility and endocytosis. Its inhibition causes complete collapse of F-actin organization. Plays an important role in cell migration by localizing along the anterior cell membrane. Overexpression leads to the inability to aggregate even at higher cell density. Also known as a negative regulator of quorum sensing. The sequence is that of Phospholipase D B (pldB) from Dictyostelium discoideum (Social amoeba).